The chain runs to 489 residues: Cytochrome P450 monooxygenase bfoB (489 aa).

Residues 1-18 (MLALYLIAGLLVGLLVYR) form the signal peptide. Residues Asn-113, Asn-348, and Asn-386 are each glycosylated (N-linked (GlcNAc...) asparagine). Heme is bound at residue Cys-429.

The protein belongs to the cytochrome P450 family. Heme is required as a cofactor.

It carries out the reaction 2 fonsecin B + NADPH + O2 + H(+) = bifonsecin B + NADP(+) + 2 H2O. It catalyses the reaction 2 rubrofusarin B + NADPH + O2 + 3 H(+) = nigerone + NADP(+) + 2 H2O. Its pathway is secondary metabolite biosynthesis. In terms of biological role, cytochrome P450 monooxygenase; part of the gene cluster that mediates the biosynthesis of bifonsecin B, a dimeric gamma-naphthopyrone. The first step in the biosynthesis of bifonsecin B is the production of gamma-naphthopyrone precursor YWA1 by the non-reducing polyketide synthase albA, via condensation of one acetyl-CoA starter unit with 6 malonyl-CoA units. YWA1 is then methylated by bfoE at position C-6 to yield foncesin which is further methylated at position C-8 by bfoD to produce fonsecin B. A key enzyme in the biosynthetic pathway is the cytochrome P450 monooxygenase bfoB which catalyzes the oxidative dimerization of fonsecin B to bifonsecin B. Bfob also catalyzes the oxidative dimerization of rubrofusarin B into nigerone. The stereoselectivity of bfoB is influenced by the two natural monomeric substrates; homodimerization of fonsecin B yields a stereochemically pure biaryl, M-foncerine B, while rubrofusarin B yields a mixture of enantiomers M- and P-nigerone. In Aspergillus brasiliensis (strain CBS 101740 / IMI 381727 / IBT 21946), this protein is Cytochrome P450 monooxygenase bfoB.